Consider the following 219-residue polypeptide: Ribosomal RNA small subunit methyltransferase G (219 aa).

The S-adenosyl-L-methionine site is built by Gly81, Leu86, and Arg150.

It belongs to the methyltransferase superfamily. RNA methyltransferase RsmG family.

It localises to the cytoplasm. It carries out the reaction guanosine(527) in 16S rRNA + S-adenosyl-L-methionine = N(7)-methylguanosine(527) in 16S rRNA + S-adenosyl-L-homocysteine. In terms of biological role, specifically methylates the N7 position of guanine in position 527 of 16S rRNA. This is Ribosomal RNA small subunit methyltransferase G from Magnetococcus marinus (strain ATCC BAA-1437 / JCM 17883 / MC-1).